Consider the following 121-residue polypeptide: Small ribosomal subunit protein uS13 (121 aa).

A disordered region spans residues 91–121 (HKRGLPVRGQRTRTNARTRKGPRRAAASLKK).

Belongs to the universal ribosomal protein uS13 family. As to quaternary structure, part of the 30S ribosomal subunit. Forms a loose heterodimer with protein S19. Forms two bridges to the 50S subunit in the 70S ribosome.

Its function is as follows. Located at the top of the head of the 30S subunit, it contacts several helices of the 16S rRNA. In the 70S ribosome it contacts the 23S rRNA (bridge B1a) and protein L5 of the 50S subunit (bridge B1b), connecting the 2 subunits; these bridges are implicated in subunit movement. Contacts the tRNAs in the A and P-sites. This is Small ribosomal subunit protein uS13 from Bordetella petrii (strain ATCC BAA-461 / DSM 12804 / CCUG 43448).